Consider the following 120-residue polypeptide: Prefoldin subunit beta (120 aa).

Belongs to the prefoldin subunit beta family. As to quaternary structure, heterohexamer of two alpha and four beta subunits.

Its subcellular location is the cytoplasm. Its function is as follows. Molecular chaperone capable of stabilizing a range of proteins. Seems to fulfill an ATP-independent, HSP70-like function in archaeal de novo protein folding. This is Prefoldin subunit beta (pfdB) from Methanopyrus kandleri (strain AV19 / DSM 6324 / JCM 9639 / NBRC 100938).